Reading from the N-terminus, the 362-residue chain is MKASILTKLETLVERYEEVQHLLGDPDVIGNQDKFRALSKEYSQLEEVTKCFQAYQQAQDDLAAAEDMANEDDEEMREMAQEEIKEAKEAIERLTDELQILLLPKDPNDDRNCFLEIRAGAGGDEAGIFAGDLFRMYSKYAEKRGWRIEVMSSNEAEHGGYKEMIAKVSGDGAYGVLKFESGGHRVQRVPATESQGRVHTSACTVAVMAEIPEADLPEIKAADLKIDTFRASGAGGQHVNTTDSAIRITHLPTGTVVECQDERSQHKNKAKAMAVLAARIVQAEEERRAAEVSDTRRNLLGSGDRSDRIRTYNYPQGRVSDHRINLTIYRLNEVMEGDLQSLIDPVVQEHQADQLAALAENG.

An N5-methylglutamine modification is found at Q237.

The protein belongs to the prokaryotic/mitochondrial release factor family. Methylated by PrmC. Methylation increases the termination efficiency of RF1.

It localises to the cytoplasm. Peptide chain release factor 1 directs the termination of translation in response to the peptide chain termination codons UAG and UAA. The protein is Peptide chain release factor 1 of Vibrio campbellii (strain ATCC BAA-1116).